A 186-amino-acid polypeptide reads, in one-letter code: GTP cyclohydrolase 1 (186 aa).

Zn(2+) is bound by residues Cys-78, His-81, and Cys-150.

It belongs to the GTP cyclohydrolase I family. As to quaternary structure, toroid-shaped homodecamer, composed of two pentamers of five dimers.

It catalyses the reaction GTP + H2O = 7,8-dihydroneopterin 3'-triphosphate + formate + H(+). It functions in the pathway cofactor biosynthesis; 7,8-dihydroneopterin triphosphate biosynthesis; 7,8-dihydroneopterin triphosphate from GTP: step 1/1. In Enterococcus faecalis (strain ATCC 700802 / V583), this protein is GTP cyclohydrolase 1.